A 141-amino-acid chain; its full sequence is Large ribosomal subunit protein uL23B (141 aa).

A disordered region spans residues 1–22 (MSVGKAKGAQKTVQKGIHNKVA).

It belongs to the universal ribosomal protein uL23 family. Component of the large ribosomal subunit (LSU). Mature yeast ribosomes consist of a small (40S) and a large (60S) subunit. The 40S small subunit contains 1 molecule of ribosomal RNA (18S rRNA) and at least 33 different proteins. The large 60S subunit contains 3 rRNA molecules (25S, 5.8S and 5S rRNA) and at least 46 different proteins. uL23 is associated with the polypeptide exit tunnel.

Its subcellular location is the cytoplasm. Its function is as follows. This protein binds to a specific region on the 26S rRNA. Component of the ribosome, a large ribonucleoprotein complex responsible for the synthesis of proteins in the cell. The small ribosomal subunit (SSU) binds messenger RNAs (mRNAs) and translates the encoded message by selecting cognate aminoacyl-transfer RNA (tRNA) molecules. The large subunit (LSU) contains the ribosomal catalytic site termed the peptidyl transferase center (PTC), which catalyzes the formation of peptide bonds, thereby polymerizing the amino acids delivered by tRNAs into a polypeptide chain. The nascent polypeptides leave the ribosome through a tunnel in the LSU and interact with protein factors that function in enzymatic processing, targeting, and the membrane insertion of nascent chains at the exit of the ribosomal tunnel. uL23 is a major component of the universal docking site for these factors at the polypeptide exit tunnel. This chain is Large ribosomal subunit protein uL23B (rpl2502), found in Schizosaccharomyces pombe (strain 972 / ATCC 24843) (Fission yeast).